Here is a 552-residue protein sequence, read N- to C-terminus: Iduronate 2-sulfatase (552 aa).

An N-terminal signal peptide occupies residues methionine 1 to alanine 29. Positions alanine 30 to alanine 35 are excised as a propeptide. The Ca(2+) site is built by aspartate 47, aspartate 48, and cysteine 86. The Nucleophile role is filled by cysteine 86. Cysteine 86 carries the 3-oxoalanine (Cys) modification. An N-linked (GlcNAc...) asparagine glycan is attached at asparagine 117. Histidine 140 is an active-site residue. Asparagine 146 carries N-linked (GlcNAc...) asparagine glycosylation. Cysteine 173 and cysteine 186 are disulfide-bonded. Asparagine 248 and asparagine 282 each carry an N-linked (GlcNAc...) asparagine glycan. Ca(2+)-binding residues include aspartate 336 and histidine 337. An intrachain disulfide couples cysteine 424 to cysteine 434. Residues asparagine 515 and asparagine 539 are each glycosylated (N-linked (GlcNAc...) asparagine).

It belongs to the sulfatase family. As to quaternary structure, monomer. The 58-kDa mature form is composed of two chains resulting from proteolitic processing, the 42-kDa chain and the 14-kDa chain that remain stably associated and form the 58-kDa intermediate form which is enzymatically active. Requires Ca(2+) as cofactor. Post-translationally, synthesized as a 75-kDa precursor form in the endoplasmic reticulum (ER), and then processed by proteolytic cleavage through various intermediates to yield a 55-kDa mature form, with the release of an 18 kDa polypeptide. The conversion to 3-oxoalanine (also known as C-formylglycine, FGly), of a serine or cysteine residue in prokaryotes and of a cysteine residue in eukaryotes, is critical for catalytic activity. In terms of tissue distribution, found to be expressed in alpha and beta pancreatic cells.

The protein resides in the lysosome. The catalysed reaction is Hydrolysis of the 2-sulfate groups of the L-iduronate 2-sulfate units of dermatan sulfate, heparan sulfate and heparin.. Functionally, lysosomal enzyme involved in the degradation pathway of dermatan sulfate and heparan sulfate. The polypeptide is Iduronate 2-sulfatase (Ids) (Mus musculus (Mouse)).